We begin with the raw amino-acid sequence, 407 residues long: Argininosuccinate synthase (407 aa).

ATP-binding positions include A12–S20 and A39. Residues Y92 and S97 each coordinate L-citrulline. G122 contacts ATP. L-aspartate-binding residues include T124, N128, and D129. N128 lines the L-citrulline pocket. L-citrulline is bound by residues R132, S183, S192, E268, and Y280.

This sequence belongs to the argininosuccinate synthase family. Type 1 subfamily. In terms of assembly, homotetramer.

It localises to the cytoplasm. The enzyme catalyses L-citrulline + L-aspartate + ATP = 2-(N(omega)-L-arginino)succinate + AMP + diphosphate + H(+). The protein operates within amino-acid biosynthesis; L-arginine biosynthesis; L-arginine from L-ornithine and carbamoyl phosphate: step 2/3. This is Argininosuccinate synthase from Caulobacter sp. (strain K31).